A 97-amino-acid polypeptide reads, in one-letter code: UPF0250 protein HD_2015 (97 aa).

This sequence belongs to the UPF0250 family.

The polypeptide is UPF0250 protein HD_2015 (Haemophilus ducreyi (strain 35000HP / ATCC 700724)).